Consider the following 219-residue polypeptide: 2-C-methyl-D-erythritol 4-phosphate cytidylyltransferase (219 aa).

It belongs to the IspD/TarI cytidylyltransferase family. IspD subfamily.

The catalysed reaction is 2-C-methyl-D-erythritol 4-phosphate + CTP + H(+) = 4-CDP-2-C-methyl-D-erythritol + diphosphate. It functions in the pathway isoprenoid biosynthesis; isopentenyl diphosphate biosynthesis via DXP pathway; isopentenyl diphosphate from 1-deoxy-D-xylulose 5-phosphate: step 2/6. Its function is as follows. Catalyzes the formation of 4-diphosphocytidyl-2-C-methyl-D-erythritol from CTP and 2-C-methyl-D-erythritol 4-phosphate (MEP). The chain is 2-C-methyl-D-erythritol 4-phosphate cytidylyltransferase from Bacteroides thetaiotaomicron (strain ATCC 29148 / DSM 2079 / JCM 5827 / CCUG 10774 / NCTC 10582 / VPI-5482 / E50).